Here is a 103-residue protein sequence, read N- to C-terminus: Integration host factor subunit alpha (103 aa).

The protein belongs to the bacterial histone-like protein family. In terms of assembly, heterodimer of an alpha and a beta chain.

This protein is one of the two subunits of integration host factor, a specific DNA-binding protein that functions in genetic recombination as well as in transcriptional and translational control. The chain is Integration host factor subunit alpha from Aromatoleum aromaticum (strain DSM 19018 / LMG 30748 / EbN1) (Azoarcus sp. (strain EbN1)).